The chain runs to 667 residues: Single-minded homolog 2 (667 aa).

Residues 1 to 53 (MKEKSKNAAKTRREKENGEFYELAKLLPLPSAITSQLDKASIIRLTTSYLKMR) enclose the bHLH domain. PAS domains lie at 77–149 (AKEL…LHHH) and 218–288 (PPSA…LVKG). The PAC domain occupies 292-335 (TKYYRLLSKRGGWVWVQSYATVVHNSRSSRPHCIVSVNYVLTEI). One can recognise a Single-minded C-terminal domain in the interval 336-667 (EYKELQLSLE…GASVIITNGR (332 aa)). 3 disordered regions span residues 356 to 389 (WRTALSTSQETRKLVKPKNTKMKTKLRTNPYPPQ), 409 to 428 (ASPPASAAAPPELQPHSESS), and 500 to 520 (SSSSPAKNPPEPPANTARHSL). Residues 367-386 (RKLVKPKNTKMKTKLRTNPY) carry the Nuclear localization signal motif. Basic residues predominate over residues 369-381 (LVKPKNTKMKTKL). Low complexity predominate over residues 409–419 (ASPPASAAAPP).

Efficient DNA binding requires dimerization with another bHLH protein. Heterodimer of SIM2 and ARNT.

It is found in the nucleus. In terms of biological role, transcription factor that may be a master gene of CNS development in cooperation with Arnt. It may have pleiotropic effects in the tissues expressed during development. This chain is Single-minded homolog 2 (SIM2), found in Homo sapiens (Human).